Consider the following 336-residue polypeptide: DNA repair protein RAD51 homolog A (336 aa).

The HhH domain maps to 45–74 (TVEAVAYAPKKELLNIKGISEAKAEKILAE). 124–131 (GEFRTGKT) contacts ATP. Residues 242–257 (LARFLRMLLRLADEFG) carry the Nuclear export signal motif.

It belongs to the RecA family. RAD51 subfamily. In terms of assembly, forms linear homooligomers, giving rise to a RAD51 nucleoprotein filament, which is essential for strand-pairing reactions during DNA recombination.

It localises to the nucleus. The protein resides in the cytoplasm. The protein localises to the chromosome. Functionally, plays an important role in homologous strand exchange, a key step in DNA repair through homologous recombination (HR). Binds to single-stranded DNA in an ATP-dependent manner to form nucleoprotein filaments which are essential for the homology search and strand exchange. Catalyzes the recognition of homology and strand exchange between homologous DNA partners to form a joint molecule between a processed DNA break and the repair template. Recruited to resolve stalled replication forks during replication stress. Also involved in interstrand cross-link repair. The chain is DNA repair protein RAD51 homolog A (rad51-a) from Xenopus laevis (African clawed frog).